A 327-amino-acid polypeptide reads, in one-letter code: uncharacterized protein (327 aa).

Residues 1-23 (MGGGRLPPLWLPLLIAWSEWGNC) form the signal peptide. 2 N-linked (GlcNAc...) asparagine; by host glycosylation sites follow: Asn-144 and Asn-239. A disordered region spans residues 298–327 (EESEAAEETAAGEASAVAAAAVSEEEQRRE). The span at 305-319 (ETAAGEASAVAAAAV) shows a compositional bias: low complexity.

This is an uncharacterized protein from Human cytomegalovirus (strain AD169) (HHV-5).